The chain runs to 190 residues: Signal peptidase I W (190 aa).

A helical membrane pass occupies residues isoleucine 4–isoleucine 24. The active site involves serine 45. Residues proline 143–valine 163 traverse the membrane as a helical segment.

This sequence belongs to the peptidase S26B family.

It is found in the cell membrane. The enzyme catalyses Cleavage of hydrophobic, N-terminal signal or leader sequences from secreted and periplasmic proteins.. Its function is as follows. Required for the cleavage of the signal sequence of TasA and TapA, which are involved in biofilm formation. The chain is Signal peptidase I W from Bacillus subtilis (strain 168).